Reading from the N-terminus, the 148-residue chain is UPF0178 protein SH2212 (148 aa).

It belongs to the UPF0178 family.

The polypeptide is UPF0178 protein SH2212 (Staphylococcus haemolyticus (strain JCSC1435)).